Consider the following 370-residue polypeptide: Chorismate synthase (370 aa).

NADP(+) contacts are provided by Arg-48 and Arg-54. Residues 130–132 (RSS), 242–243 (NA), Gly-287, 302–306 (KPTSS), and Arg-328 each bind FMN.

Belongs to the chorismate synthase family. Homotetramer. FMNH2 serves as cofactor.

It carries out the reaction 5-O-(1-carboxyvinyl)-3-phosphoshikimate = chorismate + phosphate. It functions in the pathway metabolic intermediate biosynthesis; chorismate biosynthesis; chorismate from D-erythrose 4-phosphate and phosphoenolpyruvate: step 7/7. Functionally, catalyzes the anti-1,4-elimination of the C-3 phosphate and the C-6 proR hydrogen from 5-enolpyruvylshikimate-3-phosphate (EPSP) to yield chorismate, which is the branch point compound that serves as the starting substrate for the three terminal pathways of aromatic amino acid biosynthesis. This reaction introduces a second double bond into the aromatic ring system. The polypeptide is Chorismate synthase (Xanthobacter autotrophicus (strain ATCC BAA-1158 / Py2)).